The following is a 552-amino-acid chain: AP-1-like transcription factor (552 aa).

Polar residues predominate over residues 1–14; the sequence is MSGQTETLSSTSNI. The segment at 1–99 is disordered; the sequence is MSGQTETLSS…QRAFRKRKED (99 aa). Residues 36 to 47 show a composition bias toward basic and acidic residues; the sequence is PVSDRSSRRTSS. Acidic residues predominate over residues 48–61; it reads EEVDLMPNVDDEVD. Basic and acidic residues predominate over residues 62-80; that stretch reads GDVKPKKIGRKNSDQEPSS. The 64-residue stretch at 76 to 139 folds into the bZIP domain; it reads QEPSSKRKAQ…RQLEEELRIL (64 aa). Residues 81–88 carry the Nuclear localization signal motif; the sequence is KRKAQNRA. The segment at 81 to 102 is basic motif; it reads KRKAQNRAAQRAFRKRKEDHLK. The leucine-zipper stretch occupies residues 104–111; sequence LETQVVTL. The tract at residues 213–244 is disordered; it reads QVPPTLVDSNSAQGTLSPETPSSSDSPSNLYL. Positions 219 to 228 are enriched in polar residues; that stretch reads VDSNSAQGTL. The span at 229–240 shows a compositional bias: low complexity; sequence SPETPSSSDSPS. The segment at 259-290 is n-CRD; the sequence is CSALSNGENGEDVADGKQFCQKLSTACGSIAC. 2 disulfides stabilise this stretch: cysteine 278-cysteine 501 and cysteine 285-cysteine 532. The tract at residues 460-489 is disordered; that stretch reads ISNHPDEVPPDGLPQKGKHDTSSQMPSENE. The tract at residues 501–532 is c-CRD; sequence CPKVWSKIINHPRFESFDIDDLCSKLKNKAKC. Residues 515-533 carry the Nuclear export signal motif; it reads ESFDIDDLCSKLKNKAKCS.

This sequence belongs to the bZIP family. YAP subfamily. Homodimer. The reduced form of pap1 interacts in the nucleus with the nuclear export protein crm1, and in the cytoplasm with the peroxiredoxin tpx1. In terms of processing, depending on the oxidative stress inducing agent, pap1 can undergo two distinct conformational changes, both masking the nuclear export signal, thus abolishing nuclear export by crm1/exportin 1. The glutathione-depleting agent diethylmaleate (DEM) leads to the non-reversible modification of at least 2 cysteine residues in the c-CRD. Peroxide stress induces the formation of a tpx1-dependent interdomain disulfide bond between Cys-278 and Cys-501.

Its subcellular location is the nucleus. The protein resides in the cytoplasm. Its function is as follows. Transcription activator involved in multidrug resistance, oxidative stress response, and redox homeostasis. Regulates the transcription of genes encoding antioxidant enzymes like catalase ctt1 and components of the cellular thiol-reducing pathways, including the thioredoxin system (trx2, trr1), ABC transporters involved in multidrug resistance like bfr1/hba2 and pmd1 as well as the gene obr1/apt1. Preferentially binds to promoters with the core binding site 5'-TTA[CG]TAA-3'. Activity of the transcription factor is controlled through oxidation of specific cysteine residues resulting in the alteration of its subcellular location. Oxidative stress induces nuclear accumulation and as a result pap1 transcriptional activity. Required for sty1/spc1-conferred staurosporine resistance. This Schizosaccharomyces pombe (strain 972 / ATCC 24843) (Fission yeast) protein is AP-1-like transcription factor (pap1).